The sequence spans 1451 residues: Cleavage and polyadenylation specificity factor subunit 1 (1451 aa).

Basic and acidic residues-rich tracts occupy residues 401-422 and 561-572; these read QETPMEEGKENEEKEKQEEPPN and EEKREPTIEDDK. Disordered stretches follow at residues 401-432, 548-572, and 753-789; these read QETPMEEGKENEEKEKQEEPPNKKKRVDSNWA, EKPSAEGDGESPEEEKREPTIEDDK, and GESNPLTSPNKEESSRGSAAASSAHTGKESGSGRQEP. Residues 901-916 carry the Nuclear localization signal motif; sequence KKMPHNINYREKKVKV.

Belongs to the CPSF1 family.

It is found in the nucleus. It localises to the nucleoplasm. Component of the cleavage and polyadenylation specificity factor (CPSF) complex that plays a key role in pre-mRNA 3'-end formation, recognizing the AAUAAA signal sequence and interacting with poly(A) polymerase and other factors to bring about cleavage and poly(A) addition. This subunit is involved in the RNA recognition step of the polyadenylation reaction. Plays a role in eye morphogenesis and the development of retinal ganglion cell projections to the tectum. The polypeptide is Cleavage and polyadenylation specificity factor subunit 1 (cpsf1) (Danio rerio (Zebrafish)).